Here is a 189-residue protein sequence, read N- to C-terminus: Peptidyl-tRNA hydrolase (189 aa).

Tyrosine 14 contributes to the tRNA binding site. The Proton acceptor role is filled by histidine 19. Residues tyrosine 64, asparagine 66, and asparagine 112 each coordinate tRNA.

This sequence belongs to the PTH family. As to quaternary structure, monomer.

The protein localises to the cytoplasm. It carries out the reaction an N-acyl-L-alpha-aminoacyl-tRNA + H2O = an N-acyl-L-amino acid + a tRNA + H(+). Hydrolyzes ribosome-free peptidyl-tRNAs (with 1 or more amino acids incorporated), which drop off the ribosome during protein synthesis, or as a result of ribosome stalling. Functionally, catalyzes the release of premature peptidyl moieties from peptidyl-tRNA molecules trapped in stalled 50S ribosomal subunits, and thus maintains levels of free tRNAs and 50S ribosomes. The protein is Peptidyl-tRNA hydrolase of Dehalococcoides mccartyi (strain ATCC BAA-2100 / JCM 16839 / KCTC 5957 / BAV1).